A 162-amino-acid chain; its full sequence is Protein archease (162 aa).

Positions 34, 161, and 162 each coordinate Ca(2+).

This sequence belongs to the archease family. Component of the tRNA-splicing ligase complex.

In terms of biological role, component of the tRNA-splicing ligase complex required to facilitate the enzymatic turnover of catalytic subunit RTCB. Together with ddx1, acts by facilitating the guanylylation of RTCB, a key intermediate step in tRNA ligation. The polypeptide is Protein archease (Ictalurus punctatus (Channel catfish)).